Consider the following 245-residue polypeptide: tRNA pseudouridine synthase A (245 aa).

Asp52 serves as the catalytic Nucleophile. Residue Tyr111 participates in substrate binding.

The protein belongs to the tRNA pseudouridine synthase TruA family. Homodimer.

The enzyme catalyses uridine(38/39/40) in tRNA = pseudouridine(38/39/40) in tRNA. Functionally, formation of pseudouridine at positions 38, 39 and 40 in the anticodon stem and loop of transfer RNAs. The protein is tRNA pseudouridine synthase A of Wolbachia pipientis subsp. Culex pipiens (strain wPip).